A 586-amino-acid chain; its full sequence is Chaperone protein HscA homolog (586 aa).

This sequence belongs to the heat shock protein 70 family.

In terms of biological role, chaperone involved in the maturation of iron-sulfur cluster-containing proteins. Has a low intrinsic ATPase activity which is markedly stimulated by HscB. The protein is Chaperone protein HscA homolog of Rickettsia typhi (strain ATCC VR-144 / Wilmington).